Reading from the N-terminus, the 816-residue chain is Fibroblast growth factor receptor (816 aa).

The signal sequence occupies residues 1 to 19; that stretch reads MISDWCVVLVLLMSRLVFG. The Extracellular segment spans residues 20 to 370; the sequence is LNFTEPVNYI…YKEESVEKTV (351 aa). Residues Asn-21, Asn-69, Asn-119, Asn-156, Asn-171, Asn-244, Asn-274, Asn-313, and Asn-321 are each glycosylated (N-linked (GlcNAc...) asparagine). The 81-residue stretch at 25 to 105 folds into the Ig-like C2-type 1 domain; that stretch reads PVNYILKLGE…VTAMNEESVQ (81 aa). A disulfide bridge links Cys-43 with Cys-94. Residues 126 to 217 enclose the Ig-like C2-type 2 domain; sequence LRIKNDISLL…GKIEHIMTVE (92 aa). A disulfide bridge links Cys-147 with Cys-201. A helical transmembrane segment spans residues 371 to 391; that stretch reads IFIVITSMLAGLIFVAFVIFF. At 392 to 816 the chain is on the cytoplasmic side; that stretch reads ICRVRSKDKF…DILLSHYAVS (425 aa). A Protein kinase domain is found at 474–747; sequence LETDCLLGEG…QLIEDLERML (274 aa). ATP-binding positions include 480–488 and Lys-508; that span reads LGEGAFGRV. Asp-612 functions as the Proton acceptor in the catalytic mechanism. Tyr-643 bears the Phosphotyrosine; by autocatalysis mark.

It belongs to the protein kinase superfamily. Tyr protein kinase family. Fibroblast growth factor receptor subfamily.

Its subcellular location is the membrane. The enzyme catalyses L-tyrosyl-[protein] + ATP = O-phospho-L-tyrosyl-[protein] + ADP + H(+). Functionally, receptor for basic fibroblast growth factor. This chain is Fibroblast growth factor receptor (FGFR), found in Hydra vulgaris (Hydra).